Consider the following 286-residue polypeptide: 4-diphosphocytidyl-2-C-methyl-D-erythritol kinase (286 aa).

Residue Lys10 is part of the active site. 100-110 (PMGSGLGGGSS) is an ATP binding site. Asp142 is an active-site residue.

Belongs to the GHMP kinase family. IspE subfamily. As to quaternary structure, homodimer.

The catalysed reaction is 4-CDP-2-C-methyl-D-erythritol + ATP = 4-CDP-2-C-methyl-D-erythritol 2-phosphate + ADP + H(+). The protein operates within isoprenoid biosynthesis; isopentenyl diphosphate biosynthesis via DXP pathway; isopentenyl diphosphate from 1-deoxy-D-xylulose 5-phosphate: step 3/6. Functionally, catalyzes the phosphorylation of the position 2 hydroxy group of 4-diphosphocytidyl-2C-methyl-D-erythritol. In Buchnera aphidicola subsp. Acyrthosiphon pisum (strain APS) (Acyrthosiphon pisum symbiotic bacterium), this protein is 4-diphosphocytidyl-2-C-methyl-D-erythritol kinase.